A 948-amino-acid chain; its full sequence is Isoleucine--tRNA ligase (948 aa).

A 'HIGH' region motif is present at residues 58–68 (PYANGDIHIGH). Position 566 (E566) interacts with L-isoleucyl-5'-AMP. The 'KMSKS' region signature appears at 607–611 (KMSKS). K610 contributes to the ATP binding site. Residues C911, C914, C931, and C934 each coordinate Zn(2+).

It belongs to the class-I aminoacyl-tRNA synthetase family. IleS type 1 subfamily. Monomer. The cofactor is Zn(2+).

It localises to the cytoplasm. The enzyme catalyses tRNA(Ile) + L-isoleucine + ATP = L-isoleucyl-tRNA(Ile) + AMP + diphosphate. Catalyzes the attachment of isoleucine to tRNA(Ile). As IleRS can inadvertently accommodate and process structurally similar amino acids such as valine, to avoid such errors it has two additional distinct tRNA(Ile)-dependent editing activities. One activity is designated as 'pretransfer' editing and involves the hydrolysis of activated Val-AMP. The other activity is designated 'posttransfer' editing and involves deacylation of mischarged Val-tRNA(Ile). This is Isoleucine--tRNA ligase from Vibrio vulnificus (strain YJ016).